Consider the following 587-residue polypeptide: MRPRGLPPLLVVLLGCWASVSAQTDATPAVTTEGLNSTEAALATFGTFPSTRPPGTPRAPGPSSGPRPTPVTDVAVLCVCDLSPAQCDINCCCDPDCSSVDFSVFSACSVPVVTGDSQFCSQKAVIYSLNFTANPPQRVFELVDQINPSIFCIHITNYKPALSFINPEVPDENNFDTLMKTSDGFTLNAESYVSFTTKLDIPTAAKYEYGVPLQTSDSFLRFPSSLTSSLCTDNNPAAFLVNQAVKCTRKINLEQCEEIEALSMAFYSSPEILRVPDSRKKVPITVQSIVIQSLNKTLTRREDTDVLQPTLVNAGHFSLCVNVVLEVKYSLTYTDAGEVTKADLSFVLGTVSSVVVPLQQKFEIHFLQENTQPVPLSGNPGYVVGLPLAAGFQPHKGSGIIQTTNRYGQLTILHSTTEQDCLALEGVRTPVLFGYTMQSGCKLRLTGALPCQLVAQKVKSLLWGQGFPDYVAPFGNSQAQDMLDWVPIHFITQSFNRKDSCQLPGALVIEVKWTKYGSLLNPQAKIVNVTANLISSSFPEANSGNERTILISTAVTFVDVSAPAEAGFRAPPAINARLPFNFFFPFV.

An N-terminal signal peptide occupies residues 1–22; the sequence is MRPRGLPPLLVVLLGCWASVSA. Residue Asn36 is glycosylated (N-linked (GlcNAc...) asparagine). The interval 46–68 is disordered; that stretch reads GTFPSTRPPGTPRAPGPSSGPRP. Over residues 51–68 the composition is skewed to pro residues; it reads TRPPGTPRAPGPSSGPRP. N-linked (GlcNAc...) asparagine glycans are attached at residues Asn295 and Asn528.

The protein belongs to the tectonic family. Part of the tectonic-like complex (also named B9 complex).

Its subcellular location is the cytoplasm. It is found in the cytoskeleton. The protein localises to the cilium basal body. It localises to the secreted. In terms of biological role, component of the tectonic-like complex, a complex localized at the transition zone of primary cilia and acting as a barrier that prevents diffusion of transmembrane proteins between the cilia and plasma membranes. Regulator of Hedgehog (Hh), required for both activation and inhibition of the Hh pathway in the patterning of the neural tube. During neural tube development, it is required for formation of the most ventral cell types and for full Hh pathway activation. Functions in Hh signal transduction to fully activate the pathway in the presence of high Hh levels and to repress the pathway in the absence of Hh signals. Modulates Hh signal transduction downstream of SMO and RAB23. This Homo sapiens (Human) protein is Tectonic-1 (TCTN1).